A 540-amino-acid chain; its full sequence is Zinc metalloproteinase nas-10 (540 aa).

Residues 293 to 500 form the Peptidase M12A domain; the sequence is ASIFFEQNLI…VEILNKMYCK (208 aa). Disulfide bonds link Cys-339–Cys-499, Cys-365–Cys-385, Cys-504–Cys-540, Cys-511–Cys-533, and Cys-520–Cys-537. Position 394 (His-394) interacts with Zn(2+). Glu-395 is an active-site residue. His-398 and His-404 together coordinate Zn(2+). In terms of domain architecture, ShKT spans 504 to 540; it reads CDDKNVYCGAWALQDLCNNPNHNVWMRSNCRKSCNFC.

The cofactor is Zn(2+).

In terms of biological role, metalloprotease. This chain is Zinc metalloproteinase nas-10, found in Caenorhabditis elegans.